The primary structure comprises 183 residues: TATA-box-binding protein (183 aa).

2 repeat units span residues 8 to 84 (VENI…VDKI) and 99 to 175 (IQNI…KERL).

It belongs to the TBP family.

Its function is as follows. General factor that plays a role in the activation of archaeal genes transcribed by RNA polymerase. Binds specifically to the TATA box promoter element which lies close to the position of transcription initiation. In Methanosphaera stadtmanae (strain ATCC 43021 / DSM 3091 / JCM 11832 / MCB-3), this protein is TATA-box-binding protein.